We begin with the raw amino-acid sequence, 230 residues long: Stachydrine N-demethylase reductase subunit Stc3 (230 aa).

This sequence belongs to the non-flavoprotein flavin reductase family. The system is probably composed of an oxygenase subunit (Stc2) and two reductase subunits (Stc3 and Stc4).

In terms of biological role, reductase involved in the catabolism of stachydrine (L-proline betaine), a source of carbon and nitrogen. Part of a Rieske-type oxygenase system that catalyzes the demethylation of stachydrine to produce N-methyl-L-proline (monomethylproline). This subunit is probably involved in the transfer of electrons from NAD(P)H to the catalytic subunit Stc2. This is Stachydrine N-demethylase reductase subunit Stc3 from Rhizobium meliloti (strain 1021) (Ensifer meliloti).